Consider the following 276-residue polypeptide: Transmembrane protein 81 (276 aa).

The first 24 residues, 1–24 (MKTSATSFIPGSLVLAFCLPVVAT), serve as a signal peptide directing secretion. Residues 25-225 (SPKTLAIPEK…QHPPWKKKVA (201 aa)) lie on the Extracellular side of the membrane. N45 carries N-linked (GlcNAc...) asparagine glycosylation. The 94-residue stretch at 83-176 (TNWLCGMLHF…NLRLVKRLYF (94 aa)) folds into the Ig-like domain. C104 and C160 are disulfide-bonded. The N-linked (GlcNAc...) asparagine glycan is linked to N211. Residues 226-246 (IAVGIGVAGGVTGGVLVSIVL) traverse the membrane as a helical segment. Topologically, residues 247–276 (CGRLSVIHSSASLETLQALLPKGGMLRKPD) are cytoplasmic.

In terms of assembly, forms a complex with IZUMO1 and SPACA6 on spermatocyte cell membrane required for fertilization.

The protein resides in the cell membrane. In terms of biological role, essential fertilization factor required for male fertility. Part of a conserved trimeric sperm complex with the essential fertilization factors IZUMO1 and SPACA6 which bridges sperm and oocyte membranes during fertilization by binding to IZUMO1R/JUNO on the oocyte. The polypeptide is Transmembrane protein 81 (TMEM81) (Bos taurus (Bovine)).